A 374-amino-acid chain; its full sequence is Isocitrate dehydrogenase [NAD] catalytic subunit 5, mitochondrial (374 aa).

Residues 1 to 44 constitute a mitochondrion transit peptide; it reads MTMAANLARRLIGNRSTQILGAVNSSSGAASSVARAFCSSTTPI. Substrate contacts are provided by Arg-127, Arg-137, Arg-158, and Asp-245. Positions 245, 269, and 273 each coordinate Mg(2+).

Belongs to the isocitrate and isopropylmalate dehydrogenases family. In terms of assembly, heterooligomer of catalytic and regulatory subunits. The cofactor is Mg(2+). It depends on Mn(2+) as a cofactor. Ubiquitous.

The protein localises to the mitochondrion. The enzyme catalyses D-threo-isocitrate + NAD(+) = 2-oxoglutarate + CO2 + NADH. Its function is as follows. Performs an essential role in the oxidative function of the citric acid cycle. The chain is Isocitrate dehydrogenase [NAD] catalytic subunit 5, mitochondrial (IDH5) from Arabidopsis thaliana (Mouse-ear cress).